The following is a 357-amino-acid chain: 3-isopropylmalate dehydrogenase (357 aa).

Glycine 76–glutamate 89 provides a ligand contact to NAD(+). Residues arginine 96, arginine 106, arginine 134, and aspartate 224 each coordinate substrate. Aspartate 224, aspartate 248, and aspartate 252 together coordinate Mg(2+). Glycine 282–asparagine 294 contacts NAD(+).

This sequence belongs to the isocitrate and isopropylmalate dehydrogenases family. LeuB type 1 subfamily. In terms of assembly, homodimer. Mg(2+) is required as a cofactor. The cofactor is Mn(2+).

The protein localises to the cytoplasm. It catalyses the reaction (2R,3S)-3-isopropylmalate + NAD(+) = 4-methyl-2-oxopentanoate + CO2 + NADH. It participates in amino-acid biosynthesis; L-leucine biosynthesis; L-leucine from 3-methyl-2-oxobutanoate: step 3/4. Functionally, catalyzes the oxidation of 3-carboxy-2-hydroxy-4-methylpentanoate (3-isopropylmalate) to 3-carboxy-4-methyl-2-oxopentanoate. The product decarboxylates to 4-methyl-2 oxopentanoate. This chain is 3-isopropylmalate dehydrogenase, found in Xylella fastidiosa (strain 9a5c).